Here is a 278-residue protein sequence, read N- to C-terminus: HTH-type transcriptional activator RhaS (278 aa).

An HTH araC/xylS-type domain is found at 174 to 272 (NLLLAWLEDH…NWSPRDIRQG (99 aa)). 2 DNA-binding regions (H-T-H motif) span residues 191–212 (DAVA…KQQT) and 239–262 (VTDI…RREF).

Binds DNA as a dimer.

It localises to the cytoplasm. In terms of biological role, activates expression of the rhaBAD and rhaT operons. The sequence is that of HTH-type transcriptional activator RhaS from Escherichia coli O6:H1 (strain CFT073 / ATCC 700928 / UPEC).